The sequence spans 694 residues: MANGLNIGSLKIDDSQRPAGPNTTGRAAYIPPHLRGSVARPPMGLDGSGPAQAVPGLNASTWAPNNAGPHPGAGHNWANAQNFTPRDRPPGAPAGPPSMNGNTTWGNAPPRQFNANDYGKPGPNSFRGSSYGGGRSGGTRGIGGHGYWDENGKHAQGPENKRLERELFGEADDPTKQHTGINFSNYDSIPVEASGHDVPESITAFTNPPLHEHLLSNIVLARYTVPTPVQKYSIPIVMGGRDLMACAQTGSGKTGGFLFPILSQSLHTRGPEAEAARGLGRQQKAYPTALILGPTRELVSQIYDEARKFCYRTALHPRVVYGGAEMGNQLRQLDQGCNVLVATPGRLVDMMERGRISLAHIQYLVLDEADRMLDMGFEPQIRRIVQGSDMPDKHMRQTLMFSATFPPDIQKLAEEFLKDHIFLSVGRVGSTSENITQRIVECESDKDKDSALLDILCSDSTGLTLVFVETKRQADMLSDFLLDHRLPATAIHGDRTQRERERALELFRTGRCPILVATAVAARGLDIPNVTHVINYDLPNEIDDYVHRIGRTGRAGNTGISTAFFSRSKNFKIARSLVDLLKDANQEVPDFLEKLGRQGNYYGSSGGGRGGRGGGRGRGGSSSTRDIRRTGGGYGGGGMGGSRPAYGGGYGDSGAGGPYGYGGGSGGYGGGYGGGYGGGGYGNPSGPTGPSSWW.

A disordered region spans residues 1 to 158 (MANGLNIGSL…DENGKHAQGP (158 aa)). The segment covering 130-146 (SYGGGRSGGTRGIGGHG) has biased composition (gly residues). A Q motif motif is present at residues 203-231 (TAFTNPPLHEHLLSNIVLARYTVPTPVQK). The Helicase ATP-binding domain maps to 234–423 (IPIVMGGRDL…EEFLKDHIFL (190 aa)). ATP is bound at residue 247–254 (AQTGSGKT). Residues 367–370 (DEAD) carry the DEAD box motif. The 163-residue stretch at 434 to 596 (NITQRIVECE…EVPDFLEKLG (163 aa)) folds into the Helicase C-terminal domain. Residues 602-640 (YGSSGGGRGGRGGGRGRGGSSSTRDIRRTGGGYGGGGMG) are disordered. Gly residues-rich tracts occupy residues 604–620 (SSGG…GRGG) and 630–640 (TGGGYGGGGMG).

The protein belongs to the DEAD box helicase family. DDX3/DED1 subfamily.

The protein resides in the cytoplasm. The enzyme catalyses ATP + H2O = ADP + phosphate + H(+). In terms of biological role, ATP-binding RNA helicase involved in translation initiation. Remodels RNA in response to ADP and ATP concentrations by facilitating disruption, but also formation of RNA duplexes. The sequence is that of ATP-dependent RNA helicase DED1 (DED1) from Ajellomyces capsulatus (strain NAm1 / WU24) (Darling's disease fungus).